We begin with the raw amino-acid sequence, 2640 residues long: Collagen alpha-5(VI) chain (2640 aa).

A signal peptide spans 1–18; it reads MKLRLIAFVLILWTETLA. The nonhelical region stretch occupies residues 19–1426; it reads DQSPGPGPEY…ACCCTFCKCP (1408 aa). 7 VWFA domains span residues 30–209, 268–445, 474–644, 660–829, 846–1023, 1037–1214, and 1226–1413; these read DVVF…IKDV, DLIF…LKKI, DIYF…KNEI, DIMF…ESKL, DIVF…QETL, DVIF…VREI, and DVVV…LGNI. N-linked (GlcNAc...) asparagine glycosylation is found at N201, N292, and N614. Collagen-like domains follow at residues 1426–1478, 1474–1524, 1557–1614, 1632–1689, and 1706–1762; these read PGIP…GCPG, VGCP…DPGN, GQKG…GPEG, GSQG…GIPG, and GDPG…AGQP. Residues 1427–1760 form a triple-helical region region; that stretch reads GIPGPHGTRG…GRRGPKGTAG (334 aa). Residues 1435-1761 form a disordered region; sequence RGLQASKGSS…RRGPKGTAGQ (327 aa). The segment covering 1452-1464 has biased composition (basic and acidic residues); it reads HRGEDGDPGRRGE. Positions 1537-1567 are enriched in basic and acidic residues; the sequence is DGEKGFPGDPGDPGKDSNIKGQKGEKGERGR. The segment covering 1597 to 1609 has biased composition (polar residues); that stretch reads PSGQAGNPGPQGT. Residues 1610–1622 show a composition bias toward low complexity; it reads QGPEGLQGSQGSS. A Cell attachment site motif is present at residues 1649–1651; that stretch reads RGD. Residues 1718 to 1727 are compositionally biased toward gly residues; sequence GIPGGPGPKG. Residues 1740 to 1750 are compositionally biased toward low complexity; that stretch reads RSGLQGSQGPP. The tract at residues 1761–2640 is nonhelical region; that stretch reads QPIYSPCELI…NSKQDGEDAR (880 aa). VWFA domains follow at residues 1790 to 1970 and 1996 to 2186; these read ELVF…KLRR and DVAF…VKFL. Short sequence motifs (cell attachment site) lie at residues 2216 to 2218 and 2259 to 2261; these read RGD. Residues 2321–2516 form the VWFA 10 domain; that stretch reads DVAFLIDASQ…PDLDYVIKFI (196 aa). N-linked (GlcNAc...) asparagine glycosylation is present at N2541. The tract at residues 2617 to 2640 is disordered; sequence DKEEPCSAETPAPVNSKQDGEDAR.

It belongs to the type VI collagen family. As to quaternary structure, trimers composed of three different chains: alpha-1(VI), alpha-2(VI), and alpha-3(VI) or alpha-4(VI) or alpha-5(VI) or alpha-6(VI). In terms of processing, prolines at the third position of the tripeptide repeating unit (G-X-Y) are hydroxylated in some or all of the chains. In terms of tissue distribution, in newborn, it is expressed in lung, heart, kidney, muscle, brain, intestine, skin, femur, sternum and calvaria. In adult, it is widely expressed and is detected in lung, heart, kidney, spleen, muscle, ovary, uterus, brain, skin, liver and sternum.

It is found in the secreted. It localises to the extracellular space. The protein resides in the extracellular matrix. Its function is as follows. Collagen VI acts as a cell-binding protein. The polypeptide is Collagen alpha-5(VI) chain (Col6a5) (Mus musculus (Mouse)).